The sequence spans 479 residues: Aspartyl/glutamyl-tRNA(Asn/Gln) amidotransferase subunit B (479 aa).

It belongs to the GatB/GatE family. GatB subfamily. As to quaternary structure, heterotrimer of A, B and C subunits.

It catalyses the reaction L-glutamyl-tRNA(Gln) + L-glutamine + ATP + H2O = L-glutaminyl-tRNA(Gln) + L-glutamate + ADP + phosphate + H(+). It carries out the reaction L-aspartyl-tRNA(Asn) + L-glutamine + ATP + H2O = L-asparaginyl-tRNA(Asn) + L-glutamate + ADP + phosphate + 2 H(+). Its function is as follows. Allows the formation of correctly charged Asn-tRNA(Asn) or Gln-tRNA(Gln) through the transamidation of misacylated Asp-tRNA(Asn) or Glu-tRNA(Gln) in organisms which lack either or both of asparaginyl-tRNA or glutaminyl-tRNA synthetases. The reaction takes place in the presence of glutamine and ATP through an activated phospho-Asp-tRNA(Asn) or phospho-Glu-tRNA(Gln). The protein is Aspartyl/glutamyl-tRNA(Asn/Gln) amidotransferase subunit B of Streptococcus mutans serotype c (strain ATCC 700610 / UA159).